The sequence spans 386 residues: MTRTVLVLNSGSSSVKYAVLEPDSGVLIADGIVERIGQEGGAHDHAAAMRGVFDSLAADGHHLEDLGLVAVGHRVVHGGPDLYRPTIVDETVIDRLKELGPLAPLHNPPAVLGIEVARDALPDLPHVAVFDTAFFHDLPAAAATYAIDAEVARDWNIRRYGFHGTSHQYVSEQAAAFLDVPLESLSQIVLHLGNGASVSAIVGGRPVETSMGLTPMEGLVMGTRSGDVDPGVIFYLWREAGMPVEDIESMLNRRSGVRGLGGEIDFRELHRRIESGDDAAELAYEVYIHRLRKYIGAYLAILGSADVITFTAGVGENDAVVRRDALTGLAAFGIEIDEHLNDSPGRGARRISADGAPTTVLVIPTDEELAIARACTGVLGARPGDG.

Mg(2+) is bound at residue Asn-9. Position 16 (Lys-16) interacts with ATP. Residue Arg-74 coordinates substrate. The active-site Proton donor/acceptor is the Asp-131. ATP contacts are provided by residues 191-195, 265-267, and 313-317; these read HLGNG, DFR, and GVGEN. Residue Glu-367 coordinates Mg(2+).

This sequence belongs to the acetokinase family. As to quaternary structure, homodimer. The cofactor is Mg(2+). Requires Mn(2+) as cofactor.

Its subcellular location is the cytoplasm. It carries out the reaction acetate + ATP = acetyl phosphate + ADP. It participates in metabolic intermediate biosynthesis; acetyl-CoA biosynthesis; acetyl-CoA from acetate: step 1/2. Its function is as follows. Catalyzes the formation of acetyl phosphate from acetate and ATP. Can also catalyze the reverse reaction. This is Acetate kinase from Mycolicibacterium gilvum (strain PYR-GCK) (Mycobacterium gilvum (strain PYR-GCK)).